The sequence spans 409 residues: Nucleoprotein (409 aa).

5 disordered regions span residues 1–32 (MASG…SSGN), 45–69 (NSHP…QQHG), 122–145 (DVKS…LRFS), 164–194 (RSGR…GSED), and 238–259 (VDQV…DKMN). A compositionally biased stretch (low complexity) spans 15–31 (PVIKLGGPKPPKVGSSG). The interval 29 to 160 (SSGNASWFQA…GNFRWDFIPL (132 aa)) is RNA-binding. The CoV N NTD domain maps to 31-156 (GNASWFQAIK…GGPDGNFRWD (126 aa)). The segment covering 122–138 (DVKSRSHQGTRDPDKFD) has biased composition (basic and acidic residues). Low complexity predominate over residues 164–179 (RSGRSTAASSAASSRA). Composition is skewed to basic and acidic residues over residues 180–192 (PSRD…RSGS) and 247–259 (KGKE…DKMN). Phosphoserine; by host is present on residues S190 and S192. The CoV N CTD domain occupies 219–331 (ADEMAHRRYC…QCVDGVGTRP (113 aa)). Positions 226-333 (RYCKRTIPPG…VDGVGTRPKD (108 aa)) are dimerization. Cysteines 320 and 323 form a disulfide. Positions 326–409 (GVGTRPKDDE…GDSALGENEL (84 aa)) are disordered. Residues 341-357 (RSSSRPATRTSSPAPRQ) show a composition bias toward low complexity. Residues 358–367 (QRPKKEKKPK) show a composition bias toward basic residues. A Phosphothreonine; by host modification is found at T378. S379 carries the phosphoserine; by host modification.

The protein belongs to the gammacoronavirus nucleocapsid protein family. Homooligomer. Both monomeric and oligomeric forms interact with RNA. Interacts with protein M. Interacts with NSP3; this interaction serves to tether the genome to the newly translated replicase-transcriptase complex at a very early stage of infection. Post-translationally, ADP-ribosylated. The ADP-ribosylation is retained in the virion during infection. Phosphorylated on serine and threonine residues.

It is found in the virion. It localises to the host endoplasmic reticulum-Golgi intermediate compartment. The protein localises to the host Golgi apparatus. Packages the positive strand viral genome RNA into a helical ribonucleocapsid (RNP) and plays a fundamental role during virion assembly through its interactions with the viral genome and membrane protein M. Plays an important role in enhancing the efficiency of subgenomic viral RNA transcription as well as viral replication. This Avian infectious bronchitis virus (strain Arkansas 99) (IBV) protein is Nucleoprotein.